Here is a 433-residue protein sequence, read N- to C-terminus: MAEQVFQNFETLQLHAGYTPDPHTRSTAVPIYATSSYTFNDSAHGARLFGLKELGNIYSRLMNPTVDVFEKRIAALEGGIAAAATSSGQAAQFLTIATLAKAGDNIVASSHLYGGTYNQLNVLLPRFGIKTKFVRSGKLEDYAAAIDDQTRAIYVESMSNPDYVVPDFEGIAKIAHEHGIPLVVDNTLGAGGYYIRPIEHGADIVVHSATKWIGGHGTTIGGVIVDSGRFNWNKHSERFPEMVEPSPSYHGLKYWEAFGPATFITRIRVEMLRDIGACLSPFSAQQLLLGIETLGLRAERHAQNTEKLAKYFESSPNVSWVLWPGSESHPTYAQAKKYLTRGFGAMLSIGVKGDASAGSKVVDGLKLVSNLANVGDAKSLAIHPWSTTHEQLSEDERLASGVTEDMIRISVGIEHVDDIIADFEQSFQKAYGS.

K211 carries the post-translational modification N6-(pyridoxal phosphate)lysine.

Belongs to the trans-sulfuration enzymes family. Pyridoxal 5'-phosphate is required as a cofactor.

It participates in mycotoxin biosynthesis. Its function is as follows. Sulfhydrylase; part of the gene cluster that mediates the biosynthesis of fusaric acid, a mycotoxin with low to moderate toxicity to animals and humans, but with high phytotoxic properties. L-aspartate is suggested as fusaric acid amino acid precursor that is activated and further processed to O-acetyl-L-homoserine by cluster enzymes aspartate kinase FUB3 and homoserine O-acetyltransferase FUB5, as well as enzymes of the primary metabolism. The polyketide synthase (PKS) FUB1 generates the triketide trans-2-hexenal which is presumptively released by the hydrolase FUB4 and linked to the NRPS-bound amino acid precursor by NAD(P)-dependent dehydrogenase FUB6. FUB1, FUB4, and the non-canonical NRPS Fub8 may form an enzyme complex. Further processing of the NRPS-bound intermediate might be carried out by FUB6 and the sulfhydrylase FUB7, enabling a spontaneous electrocyclization to close the carbon backbone of fusaric acid. Dihydrofusaric acid is likely to be released via reduction by the thioester reductase (TR) domain of FUB8 whereupon the final oxidation to fusaric acid may (also) be performed by the FMN-dependent dehydrogenase FUB9. The sequence is that of Sulfhydrylase FUB7 from Fusarium oxysporum f. sp. lycopersici (strain 4287 / CBS 123668 / FGSC 9935 / NRRL 34936) (Fusarium vascular wilt of tomato).